Consider the following 656-residue polypeptide: Broad substrate specificity ATP-binding cassette transporter ABCG2 (656 aa).

The disordered stretch occupies residues 1–25; the sequence is MSSNSYQVSIPMSKRNTNGLPGSSS. Over 1–394 the chain is Cytoplasmic; the sequence is MSSNSYQVSI…SFKNLLGNPQ (394 aa). The 250-residue stretch at 37 to 286 folds into the ABC transporter domain; that stretch reads LSFHDICYRV…FASIGYNCEP (250 aa). ATP contacts are provided by residues 80–87, 184–190, Glu211, and His243; these read GPTGGGKS and RGVSGGE. Residues 390 to 652 form the ABC transmembrane type-2 domain; it reads LGNPQASVAQ…TIAYLKLLLL (263 aa). A helical membrane pass occupies residues 395 to 415; sequence ASVAQIIVTIILGLVIGAIFY. At 416 to 429 the chain is on the extracellular side; it reads DLKNDPSGIQNRAG. The helical transmembrane segment at 430–450 threads the bilayer; it reads VLFFLTTNQCFSSVSAVELLV. Residues 451–478 are Cytoplasmic-facing; the sequence is VEKKLFIHEYISGYYRVSSYFFGKLLSD. The chain crosses the membrane as a helical span at residues 479 to 498; that stretch reads LLPMRMLPSIIFTCITYFLL. Over 499–507 the chain is Extracellular; it reads GLKPAVGSF. A helical transmembrane segment spans residues 508–530; that stretch reads FIMMFTLMMVAYSASSMALAIAA. Residues 531 to 536 lie on the Cytoplasmic side of the membrane; it reads GQSVVS. A helical membrane pass occupies residues 537 to 557; sequence VATLLMTISFVFMMIFSGLLV. At 558–631 the chain is on the extracellular side; it reads NLKTVVPWLS…LSAWGLWQNH (74 aa). Cys593 and Cys609 are oxidised to a cystine. Residues Asn597 and Asn601 are each glycosylated (N-linked (GlcNAc...) asparagine). Residues 632–652 form a helical membrane-spanning segment; it reads VALACMMVIFLTIAYLKLLLL. At 653–656 the chain is on the cytoplasmic side; the sequence is KKYS.

It belongs to the ABC transporter superfamily. ABCG family. Eye pigment precursor importer (TC 3.A.1.204) subfamily. In terms of assembly, homodimer; disulfide-linked. The minimal functional unit is a homodimer, but the major oligomeric form in plasma membrane is a homotetramer with possibility of higher order oligomerization up to homododecamers. Post-translationally, N-glycosylated. Glycosylation-deficient ABCG2 is normally expressed and functional. In terms of processing, phosphorylated. Phosphorylation may regulate the localization to the plasma membrane, the homooligomerization and therefore, the activity of the transporter. High expression in brain, kidney and lung. Also expressed in livere, colon, small intestine, heart, skeletal muscle, spleen, stomach and pancreas.

It localises to the cell membrane. The protein resides in the apical cell membrane. Its subcellular location is the mitochondrion membrane. The catalysed reaction is ATP + H2O + xenobioticSide 1 = ADP + phosphate + xenobioticSide 2.. It catalyses the reaction urate(in) + ATP + H2O = urate(out) + ADP + phosphate + H(+). It carries out the reaction indoxyl sulfate(in) + ATP + H2O = indoxyl sulfate(out) + ADP + phosphate + H(+). The enzyme catalyses sphing-4-enine 1-phosphate(in) + ATP + H2O = sphing-4-enine 1-phosphate(out) + ADP + phosphate + H(+). The catalysed reaction is estrone 3-sulfate(in) + ATP + H2O = estrone 3-sulfate(out) + ADP + phosphate + H(+). It catalyses the reaction dehydroepiandrosterone 3-sulfate(in) + ATP + H2O = dehydroepiandrosterone 3-sulfate(out) + ADP + phosphate + H(+). It carries out the reaction 4-methylumbelliferone sulfate(in) + ATP + H2O = 4-methylumbelliferone sulfate(out) + ADP + phosphate + H(+). The enzyme catalyses 5,7-dimethyl-2-methylamino-4-(3-pyridylmethyl)-1,3-benzothiazol-6-yl beta-D-glucuronate(in) + ATP + H2O = 5,7-dimethyl-2-methylamino-4-(3-pyridylmethyl)-1,3-benzothiazol-6-yl beta-D-glucuronate(out) + ADP + phosphate + H(+). The catalysed reaction is 4-methylumbelliferone beta-D-glucuronate(in) + ATP + H2O = 4-methylumbelliferone beta-D-glucuronate(out) + ADP + phosphate + H(+). It catalyses the reaction 5,7-dimethyl-2-methylamino-4-(3-pyridylmethyl)-1,3-benzothiazol-6-yl sulfate(in) + ATP + H2O = 5,7-dimethyl-2-methylamino-4-(3-pyridylmethyl)-1,3-benzothiazol-6-yl sulfate(out) + ADP + phosphate + H(+). It carries out the reaction 17beta-estradiol 17-O-(beta-D-glucuronate)(in) + ATP + H2O = 17beta-estradiol 17-O-(beta-D-glucuronate)(out) + ADP + phosphate + H(+). The enzyme catalyses methotrexate(in) + ATP + H2O = methotrexate(out) + ADP + phosphate + H(+). The catalysed reaction is riboflavin(in) + ATP + H2O = riboflavin(out) + ADP + phosphate + H(+). It catalyses the reaction pheophorbide a(in) + ATP + H2O = pheophorbide a(out) + ADP + phosphate + H(+). It carries out the reaction itaconate(in) + ATP + H2O = itaconate(out) + ADP + phosphate + H(+). Its function is as follows. Broad substrate specificity ATP-dependent transporter of the ATP-binding cassette (ABC) family that actively extrudes a wide variety of physiological compounds, dietary toxins and xenobiotics from cells. Involved in porphyrin homeostasis, mediating the export of protoporphyrin IX (PPIX) from both mitochondria to cytosol and cytosol to extracellular space, it also functions in the cellular export of heme. Also mediates the efflux of sphingosine-1-P from cells. Acts as a urate exporter functioning in both renal and extrarenal urate excretion. In kidney, it also functions as a physiological exporter of the uremic toxin indoxyl sulfate. Also involved in the excretion of steroids like estrone 3-sulfate/E1S, 3beta-sulfooxy-androst-5-en-17-one/DHEAS, and other sulfate conjugates. Mediates the secretion of the riboflavin and biotin vitamins into milk. Extrudes pheophorbide a, a phototoxic porphyrin catabolite of chlorophyll, reducing its bioavailability. Plays an important role in the exclusion of xenobiotics from the brain. It confers to cells a resistance to multiple drugs and other xenobiotics including mitoxantrone, pheophorbide, camptothecin, methotrexate, azidothymidine, and the anthracyclines daunorubicin and doxorubicin, through the control of their efflux. In placenta, it limits the penetration of drugs from the maternal plasma into the fetus. May play a role in early stem cell self-renewal by blocking differentiation. In inflammatory macrophages, exports itaconate from the cytosol to the extracellular compartment and limits the activation of TFEB-dependent lysosome biogenesis involved in antibacterial innate immune response. The protein is Broad substrate specificity ATP-binding cassette transporter ABCG2 (ABCG2) of Sus scrofa (Pig).